Here is a 1789-residue protein sequence, read N- to C-terminus: Protein TIC 214 (1789 aa).

Transmembrane regions (helical) follow at residues 19–39, 68–88, 91–111, 133–153, 176–196, and 227–247; these read IINS…FSIG, FIAG…HLAL, PHTI…WNNH, VFLN…SSML, VGWL…LVWI, and IFSI…PSPI.

Belongs to the TIC214 family. In terms of assembly, part of the Tic complex.

It is found in the plastid. The protein localises to the chloroplast inner membrane. In terms of biological role, involved in protein precursor import into chloroplasts. May be part of an intermediate translocation complex acting as a protein-conducting channel at the inner envelope. The sequence is that of Protein TIC 214 from Capsella bursa-pastoris (Shepherd's purse).